The primary structure comprises 251 residues: MICYELPLNERIRMLLRLEDLFDKIDFFSARDTSFEHHAALVALFEILDVTSRSDLKSDLLQELDKQRTMLEGLQDNPGVSEKALIHILQDIRAAFRGLLDIPGRIGGHLRDDEWLMSVKQRMSIPGGACEFDLPAYHYWLNMAPDARRADLQNWITPLTSIRSGINIILNILRNSGTKFCYIAAKGVFQQAGSEHQAHLLCLHISDEISCIPEISANKYALNIRFIPWRSDHKTEVCEEDVPFELTFCSL.

This sequence belongs to the ZapD family. In terms of assembly, interacts with FtsZ.

Its subcellular location is the cytoplasm. Cell division factor that enhances FtsZ-ring assembly. Directly interacts with FtsZ and promotes bundling of FtsZ protofilaments, with a reduction in FtsZ GTPase activity. The polypeptide is Cell division protein ZapD (Nitrosomonas eutropha (strain DSM 101675 / C91 / Nm57)).